Reading from the N-terminus, the 435-residue chain is Probable glycine dehydrogenase (decarboxylating) subunit 1 (435 aa).

This sequence belongs to the GcvP family. N-terminal subunit subfamily. As to quaternary structure, the glycine cleavage system is composed of four proteins: P, T, L and H. In this organism, the P 'protein' is a heterodimer of two subunits.

It catalyses the reaction N(6)-[(R)-lipoyl]-L-lysyl-[glycine-cleavage complex H protein] + glycine + H(+) = N(6)-[(R)-S(8)-aminomethyldihydrolipoyl]-L-lysyl-[glycine-cleavage complex H protein] + CO2. The glycine cleavage system catalyzes the degradation of glycine. The P protein binds the alpha-amino group of glycine through its pyridoxal phosphate cofactor; CO(2) is released and the remaining methylamine moiety is then transferred to the lipoamide cofactor of the H protein. In Coprothermobacter proteolyticus (strain ATCC 35245 / DSM 5265 / OCM 4 / BT), this protein is Probable glycine dehydrogenase (decarboxylating) subunit 1.